Consider the following 232-residue polypeptide: Ion-translocating oxidoreductase complex subunit E (232 aa).

6 helical membrane passes run 18–38 (GLVQ…LTNA), 39–59 (LGLG…VSLV), 69–89 (IPVF…LINA), 93–113 (GLYL…IIIG), 127–147 (AAFD…VLGA), and 182–202 (PFLL…LIAL).

It belongs to the NqrDE/RnfAE family. The complex is composed of six subunits: RnfA, RnfB, RnfC, RnfD, RnfE and RnfG.

The protein resides in the cell inner membrane. In terms of biological role, part of a membrane-bound complex that couples electron transfer with translocation of ions across the membrane. This is Ion-translocating oxidoreductase complex subunit E from Shewanella sp. (strain MR-4).